Reading from the N-terminus, the 208-residue chain is Protein-L-isoaspartate O-methyltransferase (208 aa).

Ser59 is an active-site residue.

Belongs to the methyltransferase superfamily. L-isoaspartyl/D-aspartyl protein methyltransferase family.

The protein resides in the cytoplasm. The catalysed reaction is [protein]-L-isoaspartate + S-adenosyl-L-methionine = [protein]-L-isoaspartate alpha-methyl ester + S-adenosyl-L-homocysteine. Functionally, catalyzes the methyl esterification of L-isoaspartyl residues in peptides and proteins that result from spontaneous decomposition of normal L-aspartyl and L-asparaginyl residues. It plays a role in the repair and/or degradation of damaged proteins. In Escherichia coli (strain K12 / MC4100 / BW2952), this protein is Protein-L-isoaspartate O-methyltransferase.